A 999-amino-acid polypeptide reads, in one-letter code: Sarcoplasmic/endoplasmic reticulum calcium ATPase 3 (999 aa).

Met-1 carries the N-acetylmethionine modification. Over 1–48 (MEAAHLLPAADVLRHFSVTAEGGLSPAQVTGARERYGPNELPSEEGKS) the chain is Cytoplasmic. The residue at position 17 (Ser-17) is a Phosphoserine. Residue Thr-19 is modified to Phosphothreonine. Ser-25 is modified (phosphoserine). Residues 49-69 (LWELVLEQFEDLLVRILLLAA) traverse the membrane as a helical segment. Residues 70–89 (LVSFVLAWFEEGEETTTAFV) lie on the Lumenal side of the membrane. A helical membrane pass occupies residues 90-110 (EPLVIMLILVANAIVGVWQER). At 111 to 253 (NAESAIEALK…PERTPLQRKL (143 aa)) the chain is on the cytoplasmic side. The chain crosses the membrane as a helical span at residues 254–273 (DEFGRQLSHAISVICVAVWV). Residues 274–295 (INIGHFADPAHGGSWLRGAVYY) lie on the Lumenal side of the membrane. A helical membrane pass occupies residues 296–313 (FKIAVALAVAAIPEGLPA). Ca(2+) contacts are provided by Val-304, Ala-305, Ile-307, and Glu-309. Residues 314-757 (VITTCLALGT…EEGRAIYSNM (444 aa)) lie on the Cytoplasmic side of the membrane. Residue Asp-351 is the 4-aspartylphosphate intermediate of the active site. Residues Asp-351 and Thr-353 each contribute to the Mg(2+) site. Thr-353 lines the ATP pocket. Positions 370 to 400 (AEADAGSCLLHEFTISGTTYTPEGEVRQGDQ) are interaction with phospholamban 1. Thr-415 bears the Phosphothreonine mark. Residues Glu-442, Arg-489, Lys-515, Arg-560, Thr-625, Gly-626, and Asp-627 each coordinate ATP. At Ser-662 the chain carries Phosphoserine. 2 residues coordinate ATP: Arg-678 and Lys-684. Residue Asp-703 coordinates Mg(2+). An ATP-binding site is contributed by Asn-706. The chain crosses the membrane as a helical span at residues 758–777 (KQFIRYLISSNVGEVVCIFL). Positions 768 and 771 each coordinate Ca(2+). Residues 778 to 787 (TAILGLPEAL) lie on the Lumenal side of the membrane. A helical membrane pass occupies residues 788-808 (IPVQLLWVNLVTDGLPATALG). The interaction with phospholamban 2 stretch occupies residues 788–808 (IPVQLLWVNLVTDGLPATALG). Residues Asn-796, Thr-799, and Asp-800 each contribute to the Ca(2+) site. The Cytoplasmic segment spans residues 809–828 (FNPPDLDIMEKLPRSPREAL). The helical transmembrane segment at 829–851 (ISGWLFFRYLAIGVYVGLATVAA) threads the bilayer. Over 852–897 (ATWWFVYDAEGPHINFYQLRNFLKCSEDNPLFAGIDCEVFESRFPT) the chain is Lumenal. Residues 898–917 (TMALSVLVTIEMCNALNSVS) form a helical membrane-spanning segment. Residue Glu-908 coordinates Ca(2+). The Cytoplasmic segment spans residues 918-930 (ENQSLLRMPPWMN). A helical transmembrane segment spans residues 931 to 949 (PWLLVAVAMSMALHFLILL). The Lumenal portion of the chain corresponds to 950–964 (VPPLPLIFQVTPLSG). The helical transmembrane segment at 965–985 (RQWVVVLQISLPVILLDEALK) threads the bilayer. Topologically, residues 986-999 (YLSRNHMHEEMSQK) are cytoplasmic.

Belongs to the cation transport ATPase (P-type) (TC 3.A.3) family. Type IIA subfamily. In terms of assembly, interacts with sarcolipin (SLN). Interacts with phospholamban (PLN). Interacts with myoregulin (MRLN). Interacts with DWORF. Interacts with VMP1. Interacts with TUNAR; the interaction occurs at low levels in low glucose conditions and is increased by high glucose levels. The cofactor is Mg(2+). In terms of tissue distribution, found in most tissues. Most abundant in thymus, trachea, salivary gland, spleen, bone marrow, lymph node, peripheral leukocytes, pancreas and colon. Also detected in fetal tissues. Expressed in cell lineages of hematopoietic, epithelial, or embryonic origin and also expressed in several cancer cell lines.

The protein resides in the nucleus membrane. It localises to the endoplasmic reticulum membrane. Its subcellular location is the sarcoplasmic reticulum membrane. It catalyses the reaction Ca(2+)(in) + ATP + H2O = Ca(2+)(out) + ADP + phosphate + H(+). With respect to regulation, inhibited by sarcolipin (SLN), phospholamban (PLN) and myoregulin (MRLN). Enhanced by DWORF; DWORF increases activity by displacing sarcolipin (SLN), phospholamban (PLN) and myoregulin (MRLN). Functionally, this magnesium-dependent enzyme catalyzes the hydrolysis of ATP coupled with the transport of calcium. Transports calcium ions from the cytosol into the sarcoplasmic/endoplasmic reticulum lumen. Contributes to calcium sequestration involved in muscular excitation/contraction. This chain is Sarcoplasmic/endoplasmic reticulum calcium ATPase 3, found in Homo sapiens (Human).